Here is a 122-residue protein sequence, read N- to C-terminus: Large ribosomal subunit protein uL14 (122 aa).

Belongs to the universal ribosomal protein uL14 family. As to quaternary structure, part of the 50S ribosomal subunit. Forms a cluster with proteins L3 and L19. In the 70S ribosome, L14 and L19 interact and together make contacts with the 16S rRNA in bridges B5 and B8.

In terms of biological role, binds to 23S rRNA. Forms part of two intersubunit bridges in the 70S ribosome. The protein is Large ribosomal subunit protein uL14 of Borrelia hermsii (strain HS1 / DAH).